A 370-amino-acid polypeptide reads, in one-letter code: tRNA-specific 2-thiouridylase MnmA (370 aa).

Residues 24 to 31 (AMSGGVDS) and leucine 50 contribute to the ATP site. The active-site Nucleophile is cysteine 118. Cysteine 118 and cysteine 214 form a disulfide bridge. Glycine 142 serves as a coordination point for ATP. The interaction with tRNA stretch occupies residues 164-166 (KDQ). The Cysteine persulfide intermediate role is filled by cysteine 214.

This sequence belongs to the MnmA/TRMU family.

The protein localises to the cytoplasm. The enzyme catalyses S-sulfanyl-L-cysteinyl-[protein] + uridine(34) in tRNA + AH2 + ATP = 2-thiouridine(34) in tRNA + L-cysteinyl-[protein] + A + AMP + diphosphate + H(+). Catalyzes the 2-thiolation of uridine at the wobble position (U34) of tRNA, leading to the formation of s(2)U34. This is tRNA-specific 2-thiouridylase MnmA from Ehrlichia ruminantium (strain Welgevonden).